The sequence spans 458 residues: UPF0210 protein MmarC5_0151 (458 aa).

It belongs to the UPF0210 family.

This chain is UPF0210 protein MmarC5_0151, found in Methanococcus maripaludis (strain C5 / ATCC BAA-1333).